A 214-amino-acid polypeptide reads, in one-letter code: MLCCMRRTKQVEKNEDGDQKIDQDGNKPEDKAHKAATKIQASFRGHIIRKKMKDDKKDDNSEEAVENHKGEAKDEAATTENKTPKTEEPTADGPLEVKKEAISSPAEDKKQEPSSEKPKDTPSEENQASAESESTTKGSTENSPGVDASQAKEESKKADVPEATQDAASEKEQEKAESSQEDVKKDEVEEIKASESAQQDEAVSEEAKPDQENA.

The segment at 1-214 (MLCCMRRTKQ…EEAKPDQENA (214 aa)) is disordered. 2 S-palmitoyl cysteine lipidation sites follow: Cys3 and Cys4. Basic and acidic residues-rich tracts occupy residues 9 to 33 (KQVE…DKAH), 52 to 88 (MKDD…KTEE), and 95 to 122 (LEVK…KDTP). The region spanning 32–61 (AHKAATKIQASFRGHIIRKKMKDDKKDDNS) is the IQ domain. Residues 124 to 133 (EENQASAESE) are compositionally biased toward low complexity. Basic and acidic residues-rich tracts occupy residues 150 to 160 (QAKEESKKADV), 168 to 193 (ASEK…EIKA), and 205 to 214 (EEAKPDQENA).

The protein belongs to the neuromodulin family. Binds calmodulin with a greater affinity in the absence of Ca(2+) than in its presence. Post-translationally, palmitoylated. Palmitoylation is essential for plasma membrane association.

Its subcellular location is the cell membrane. It is found in the cell projection. The protein resides in the growth cone membrane. The protein localises to the synapse. It localises to the filopodium membrane. This protein is associated with nerve growth. It is a major component of the motile 'growth cones' that form the tips of elongating axons. Plays a role in axonal and dendritic filopodia induction. The sequence is that of Neuromodulin (gap43) from Xenopus laevis (African clawed frog).